Reading from the N-terminus, the 624-residue chain is Probable potassium transport system protein Kup 1 (624 aa).

Transmembrane regions (helical) follow at residues 10-30, 48-68, 94-114, 133-153, 159-179, 210-230, 242-262, 270-290, 331-351, 363-383, 388-408, and 413-433; these read LALG…LYAL, LSLI…MIIF, PLFY…GMLT, LYPY…SLQA, IGYL…ILGI, FLLG…ADIG, FFIA…NLIV, PFFM…ATVA, IYVP…CLAF, IAVN…AVSI, TFNV…FLGA, and FITG…IMYS.

This sequence belongs to the HAK/KUP transporter (TC 2.A.72) family.

The protein resides in the cell inner membrane. The enzyme catalyses K(+)(in) + H(+)(in) = K(+)(out) + H(+)(out). Its function is as follows. Transport of potassium into the cell. Likely operates as a K(+):H(+) symporter. The protein is Probable potassium transport system protein Kup 1 of Legionella pneumophila subsp. pneumophila (strain Philadelphia 1 / ATCC 33152 / DSM 7513).